The primary structure comprises 849 residues: Protein translocase subunit SecA (849 aa).

Residues Gln-85, 103-107, and Asp-493 contribute to the ATP site; that span reads GEGKT. Zn(2+) is bound by residues Cys-832, Cys-834, Cys-843, and His-844.

The protein belongs to the SecA family. As to quaternary structure, monomer and homodimer. Part of the essential Sec protein translocation apparatus which comprises SecA, SecYEG and auxiliary proteins SecDF. Other proteins may also be involved. Zn(2+) serves as cofactor.

The protein resides in the cell membrane. The protein localises to the cytoplasm. The catalysed reaction is ATP + H2O + cellular proteinSide 1 = ADP + phosphate + cellular proteinSide 2.. Part of the Sec protein translocase complex. Interacts with the SecYEG preprotein conducting channel. Has a central role in coupling the hydrolysis of ATP to the transfer of proteins into and across the cell membrane, serving as an ATP-driven molecular motor driving the stepwise translocation of polypeptide chains across the membrane. In Streptococcus thermophilus (strain CNRZ 1066), this protein is Protein translocase subunit SecA.